The primary structure comprises 919 residues: MSRFFANGSDSESESSEEEVQAPNFNKATAFQFSDDEEEVKRVVRSTKEKRYENLTAIIKSIRNHKKIRDISNTLTSFEDLTKAYQKALPVISKEENGITPRFYIRCLAELEDFINEVWEDRDGRKNLSKNNAKSLGTLRQKVRKYIKDFEDDLSRFRENPQEESENEDEEAAAHDSDGGLDAGSDIEKREPTVAATKLAKSVPSKLPVADDEDSDESIDWDPDTESETESSEDENQYQNMRERFLKRSTEKDDKDDDKRKDKRKEQKIKLRKRAEDEDGEGWETVVKGHVVEKPKMFEKDAEIDIPLVLAKLLEIMSARGKKRTDRRLQIDLLFELRDISDQHELGVPISVKIHFNIISAIFDYNQKISEPMKLEHWALLLEVMQSMMKLLLANPDIQLSESVAEEHEEYNATPYLIRGCPLAAVERLDDEFTKLLKECDPHSNDYVSRLKDEINVVKTIELVLQYFEVNGSNNERCRIYLRKVEHLYYKFDPEVFKKKRGDIPNTTQTSVDIMDRLCKFIYAKDDTDRIRTRAILTHIYHHAMHDNWFQARDLILMSHLQDNIDAADPSTRILYNRMMANLGLCAFRQENVKDAHHCLVDLMVTGKAKELLAQGLLPQRQHERSAEQEKIEKQRQMPFHMHINLELLECVYLVSAMLLEIPYIAAHEFDARRRMISKTFYQQLRSSERQSLVGPPESMREHVVAAAKAMRCGNWQACANFIVNKKMNTKVWDLFYESDRVRDMLVKFIKEESLRTYLFTYSNVYTSISIPSLAEMYELPVQKVHSIISKMIINEELMASLDDPSETVVMHRSEPSRLQALAMQFVDKVTNLVDVNEKVFDMKQGNFFQRGNMGNRGDRGYNRNQNNQGGNWGGQRRDNRNQRNRNQRGHHKNQQNQNQQQQQQHQREQQQVQTIDEE.

The tract at residues 1 to 28 (MSRFFANGSDSESESSEEEVQAPNFNKA) is disordered. Positions 11–20 (SESESSEEEV) are enriched in acidic residues. 3 positions are modified to phosphoserine: Ser34, Ser165, and Ser177. The interval 154–275 (LSRFRENPQE…EQKIKLRKRA (122 aa)) is disordered. A compositionally biased stretch (acidic residues) spans 162–171 (QEESENEDEE). Residues 210-236 (ADDEDSDESIDWDPDTESETESSEDEN) show a composition bias toward acidic residues. Positions 241–269 (MRERFLKRSTEKDDKDDDKRKDKRKEQKI) are enriched in basic and acidic residues. One can recognise a PCI domain in the interval 640–816 (FHMHINLELL…ETVVMHRSEP (177 aa)). Residues 848 to 919 (FFQRGNMGNR…QQQVQTIDEE (72 aa)) are disordered. Residues 883 to 894 (QRNRNQRGHHKN) are compositionally biased toward basic residues. Residues 895-919 (QQNQNQQQQQQHQREQQQVQTIDEE) show a composition bias toward low complexity.

The protein belongs to the eIF-3 subunit C family. As to quaternary structure, component of the eukaryotic translation initiation factor 3 (eIF-3) complex. The eIF-3 complex interacts with pix.

It is found in the cytoplasm. Component of the eukaryotic translation initiation factor 3 (eIF-3) complex, which is involved in protein synthesis of a specialized repertoire of mRNAs and, together with other initiation factors, stimulates binding of mRNA and methionyl-tRNAi to the 40S ribosome. The eIF-3 complex specifically targets and initiates translation of a subset of mRNAs involved in cell proliferation. This chain is Eukaryotic translation initiation factor 3 subunit C, found in Drosophila willistoni (Fruit fly).